The sequence spans 195 residues: Ephrin-A2 (195 aa).

The first 16 residues, 1–16 (MELSLVVFTVVCWVSV), serve as a signal peptide directing secretion. The Ephrin RBD domain occupies 24-157 (SDRHAVYWNS…KLKVYVKPTS (134 aa)). Asn32 is a glycosylation site (N-linked (GlcNAc...) asparagine). Disulfide bonds link Cys57–Cys97 and Cys85–Cys146. Cys174 carries GPI-anchor amidated cysteine lipidation. A propeptide spans 175 to 195 (GADGPCLAVLMLLLVFLLAGV) (removed in mature form).

The protein belongs to the ephrin family. Binds to the receptor tyrosine kinases epha2, epha3, epha4 and epha5. Interacts with epha8; activates epha8. In terms of tissue distribution, widespread expression in the embryo.

It is found in the cell membrane. Cell surface GPI-bound ligand for Eph receptors, a family of receptor tyrosine kinases which are crucial for migration, repulsion and adhesion during neuronal, vascular and epithelial development. Binds promiscuously Eph receptors residing on adjacent cells, leading to contact-dependent bidirectional signaling into neighboring cells. The signaling pathway downstream of the receptor is referred to as forward signaling while the signaling pathway downstream of the ephrin ligand is referred to as reverse signaling. With the epha2 receptor may play a role in bone remodeling through regulation of osteoclastogenesis and osteoblastogenesis. The sequence is that of Ephrin-A2 (efna2) from Danio rerio (Zebrafish).